The primary structure comprises 539 residues: Chaperonin GroEL (539 aa).

ATP-binding positions include 30–33, lysine 51, 87–91, glycine 415, 479–481, and aspartate 495; these read TLGP, DGTTT, and NAA.

Belongs to the chaperonin (HSP60) family. In terms of assembly, forms a cylinder of 14 subunits composed of two heptameric rings stacked back-to-back. Interacts with the co-chaperonin GroES.

The protein localises to the cytoplasm. The catalysed reaction is ATP + H2O + a folded polypeptide = ADP + phosphate + an unfolded polypeptide.. Together with its co-chaperonin GroES, plays an essential role in assisting protein folding. The GroEL-GroES system forms a nano-cage that allows encapsulation of the non-native substrate proteins and provides a physical environment optimized to promote and accelerate protein folding. This chain is Chaperonin GroEL, found in Kluyvera intermedia (Enterobacter intermedius).